A 232-amino-acid chain; its full sequence is NKG2-D type II integral membrane protein (232 aa).

At 1-66 (MALIRDRKSH…IEKLKISPMF (66 aa)) the chain is on the cytoplasmic side. Residues 67–89 (VVRVLAIALAIRFTLNTLMWLAI) traverse the membrane as a helical; Signal-anchor for type II membrane protein segment. The Extracellular segment spans residues 90–232 (FKETFQPVLC…NTYICMKRAV (143 aa)). 2 disulfide bridges follow: C112–C121 and C115–C126. A C-type lectin domain is found at 122 to 228 (HRNNCYQFFN…CANLNTYICM (107 aa)). 3 N-linked (GlcNAc...) asparagine glycosylation sites follow: N137, N147, and N179. Intrachain disulfides connect C143/C227 and C205/C219.

As to quaternary structure, homodimer; disulfide-linked. Heterohexamer composed of two subunits of KLRK1 and four subunits of HCST/DAP10. Isoform 1 (via transmembrane domain) interacts with HCST/DAP10; the interaction is required for KLRK1 cell surface expression on activated CD8(+) T-cells, but is dispensable on activated TYROBP-expressing NK cells. Isoform 2 (via transmembrane domain) interacts with HCST/DAP10 (via transmembrane domain); the interaction is required for KLRK1 NK cell surface expression and induces NK cell-mediated cytotoxicity. Isoform 2 (via transmembrane domain) interacts with TYROBP (via transmembrane domain); the interaction is required for KLRK1 NK cell surface expression and induce NK cell-mediated cytotoxicity and cytokine secretion. Isoform 1 does not interact with TYROBP. Interacts with CEACAM1; recruits PTPN6 that dephosphorylates VAV1. Expressed in natural killer (NK) cells, activated CD8(+) alpha-beta and gamma-delta T-cells and natural killer T (NKT) cells (at protein level). May be expressed on dendritic cell (DC). Isoform 1 is strongly expressed in natural killer (NK) cells. Isoform 2 is weakly expressed in natural killer (NK) cells. Isoform 1 and isoform 2 are expressed in stimulated, but not in unstimulated, CD8(+) T-cells and macrophages.

Its subcellular location is the cell membrane. Functions as an activating and costimulatory receptor involved in immunosurveillance upon binding to various cellular stress-inducible ligands displayed at the surface of autologous tumor cells and virus-infected cells. Provides both stimulatory and costimulatory innate immune responses on activated killer (NK) cells, leading to cytotoxic activity. Acts as a costimulatory receptor for T-cell receptor (TCR) in CD8(+) T-cell-mediated adaptive immune responses by amplifying T-cell activation. Stimulates perforin-mediated elimination of ligand-expressing tumor cells. Signaling involves calcium influx, culminating in the expression of TNF-alpha. Participates in NK cell-mediated bone marrow graft rejection. May play a regulatory role in differentiation and survival of NK cells. Binds to ligands belonging to various subfamilies of MHC class I-related glycoproteins including RAET1A, RAET1B, RAET1C, RAET1D, RAET1E, H60 and MULT1. This Mus musculus (Mouse) protein is NKG2-D type II integral membrane protein (Klrk1).